Reading from the N-terminus, the 431-residue chain is Tol-Pal system protein TolB (431 aa).

An N-terminal signal peptide occupies residues 1-26 (MSLMTKLGFRALVASCLIAAGGAANA). The tract at residues 411–431 (PQILSVQGGSVREPSWGPFMQ) is disordered.

This sequence belongs to the TolB family. As to quaternary structure, the Tol-Pal system is composed of five core proteins: the inner membrane proteins TolA, TolQ and TolR, the periplasmic protein TolB and the outer membrane protein Pal. They form a network linking the inner and outer membranes and the peptidoglycan layer.

Its subcellular location is the periplasm. Part of the Tol-Pal system, which plays a role in outer membrane invagination during cell division and is important for maintaining outer membrane integrity. The protein is Tol-Pal system protein TolB of Burkholderia vietnamiensis (strain G4 / LMG 22486) (Burkholderia cepacia (strain R1808)).